The chain runs to 354 residues: Homeobox-leucine zipper protein HOX27 (354 aa).

The tract at residues 98–175 (SVAAGAPGME…DDEGASARKK (78 aa)) is disordered. The span at 148–157 (QGGGGGGGGE) shows a compositional bias: gly residues. Residues 171-230 (SARKKLRLSKEQSAFLEESFKEHSTLNPKQKVALAKQLNLRPRQVEVWFQNRRARTKLKQ) constitute a DNA-binding region (homeobox). The tract at residues 229–273 (KQTEVDCEYLKRCCETLTEENRRLHKELAELRALKTARPFYMHLP) is leucine-zipper. The tract at residues 294-323 (STSAPAAATSPAAAPTAAARTAVASPEPHR) is disordered.

It belongs to the HD-ZIP homeobox family. Class II subfamily. As to expression, expressed in seedlings, roots, stems, leaf sheaths and blades and panicles.

It is found in the nucleus. In terms of biological role, probable transcription factor. The chain is Homeobox-leucine zipper protein HOX27 (HOX27) from Oryza sativa subsp. japonica (Rice).